The chain runs to 322 residues: Protein-methionine-sulfoxide reductase catalytic subunit MsrP (322 aa).

A signal peptide (tat-type signal) is located at residues 1-59; sequence MSLRDALKTPSSEITDEAVYRDRRRLLQLFALTPALSVAGCAEADPPPPPKTVVTPAQA. Residues N79, 82-83, C137, T172, N220, R225, and 236-238 contribute to the Mo-molybdopterin site; these read YE and SIK.

It belongs to the MsrP family. As to quaternary structure, heterodimer of a catalytic subunit (MsrP) and a heme-binding subunit (MsrQ). Mo-molybdopterin serves as cofactor. Post-translationally, predicted to be exported by the Tat system. The position of the signal peptide cleavage has not been experimentally proven.

The protein localises to the periplasm. It carries out the reaction L-methionyl-[protein] + a quinone + H2O = L-methionyl-(S)-S-oxide-[protein] + a quinol. The catalysed reaction is L-methionyl-[protein] + a quinone + H2O = L-methionyl-(R)-S-oxide-[protein] + a quinol. Its function is as follows. Part of the MsrPQ system that repairs oxidized periplasmic proteins containing methionine sulfoxide residues (Met-O), using respiratory chain electrons. Thus protects these proteins from oxidative-stress damage caused by reactive species of oxygen and chlorine generated by the host defense mechanisms. MsrPQ is essential for the maintenance of envelope integrity under bleach stress, rescuing a wide series of structurally unrelated periplasmic proteins from methionine oxidation. The catalytic subunit MsrP is non-stereospecific, being able to reduce both (R-) and (S-) diastereoisomers of methionine sulfoxide. This is Protein-methionine-sulfoxide reductase catalytic subunit MsrP from Xanthomonas campestris pv. campestris (strain ATCC 33913 / DSM 3586 / NCPPB 528 / LMG 568 / P 25).